We begin with the raw amino-acid sequence, 605 residues long: Probable potassium transport system protein Kup 3 (605 aa).

Transmembrane regions (helical) follow at residues alanine 16–phenylalanine 36, isoleucine 49–alanine 69, valine 97–isoleucine 117, glycine 138–valine 158, phenylalanine 170–phenylalanine 190, glycine 212–leucine 232, alanine 247–isoleucine 267, leucine 287–isoleucine 307, isoleucine 339–phenylalanine 359, alanine 368–phenylalanine 388, alanine 397–lysine 417, and leucine 418–isoleucine 438.

The protein belongs to the HAK/KUP transporter (TC 2.A.72) family.

It is found in the cell inner membrane. The enzyme catalyses K(+)(in) + H(+)(in) = K(+)(out) + H(+)(out). Functionally, transport of potassium into the cell. Likely operates as a K(+):H(+) symporter. The sequence is that of Probable potassium transport system protein Kup 3 from Geobacter sulfurreducens (strain ATCC 51573 / DSM 12127 / PCA).